Here is a 325-residue protein sequence, read N- to C-terminus: Peroxidase 47 (325 aa).

The N-terminal stretch at methionine 1 to glycine 36 is a signal peptide. Intrachain disulfides connect cysteine 46-cysteine 125, cysteine 79-cysteine 84, cysteine 131-cysteine 321, and cysteine 209-cysteine 235. Histidine 77 acts as the Proton acceptor in catalysis. Residues aspartate 78, glycine 83, aspartate 85, and serine 87 each coordinate Ca(2+). Proline 172 provides a ligand contact to substrate. N-linked (GlcNAc...) asparagine glycosylation is present at asparagine 177. Histidine 202 is a binding site for heme b. Threonine 203 serves as a coordination point for Ca(2+). Residues aspartate 246, threonine 248, and aspartate 253 each coordinate Ca(2+).

The protein belongs to the peroxidase family. Classical plant (class III) peroxidase subfamily. The cofactor is heme b. Ca(2+) serves as cofactor.

The protein resides in the secreted. It carries out the reaction 2 a phenolic donor + H2O2 = 2 a phenolic radical donor + 2 H2O. Its function is as follows. Removal of H(2)O(2), oxidation of toxic reductants, biosynthesis and degradation of lignin, suberization, auxin catabolism, response to environmental stresses such as wounding, pathogen attack and oxidative stress. These functions might be dependent on each isozyme/isoform in each plant tissue. The sequence is that of Peroxidase 47 (PER47) from Arabidopsis thaliana (Mouse-ear cress).